Reading from the N-terminus, the 405-residue chain is Tryptophan synthase beta chain (405 aa).

Position 95 is an N6-(pyridoxal phosphate)lysine (Lys-95).

The protein belongs to the TrpB family. Tetramer of two alpha and two beta chains. Pyridoxal 5'-phosphate serves as cofactor.

It carries out the reaction (1S,2R)-1-C-(indol-3-yl)glycerol 3-phosphate + L-serine = D-glyceraldehyde 3-phosphate + L-tryptophan + H2O. It participates in amino-acid biosynthesis; L-tryptophan biosynthesis; L-tryptophan from chorismate: step 5/5. In terms of biological role, the beta subunit is responsible for the synthesis of L-tryptophan from indole and L-serine. This chain is Tryptophan synthase beta chain, found in Pseudomonas entomophila (strain L48).